We begin with the raw amino-acid sequence, 316 residues long: Acetyl-coenzyme A carboxylase carboxyl transferase subunit beta (316 aa).

Residues 29–298 enclose the CoA carboxyltransferase N-terminal domain; that stretch reads LWTKCPNCGV…LLSPLNSHHH (270 aa). Zn(2+) is bound by residues Cys-33, Cys-36, Cys-52, and Cys-55. Residues 33–55 form a C4-type zinc finger; that stretch reads CPNCGVLAYTKDLLANQLVCLDC.

This sequence belongs to the AccD/PCCB family. Acetyl-CoA carboxylase is a heterohexamer composed of biotin carboxyl carrier protein (AccB), biotin carboxylase (AccC) and two subunits each of ACCase subunit alpha (AccA) and ACCase subunit beta (AccD). The cofactor is Zn(2+).

It localises to the cytoplasm. The catalysed reaction is N(6)-carboxybiotinyl-L-lysyl-[protein] + acetyl-CoA = N(6)-biotinyl-L-lysyl-[protein] + malonyl-CoA. Its pathway is lipid metabolism; malonyl-CoA biosynthesis; malonyl-CoA from acetyl-CoA: step 1/1. Component of the acetyl coenzyme A carboxylase (ACC) complex. Biotin carboxylase (BC) catalyzes the carboxylation of biotin on its carrier protein (BCCP) and then the CO(2) group is transferred by the transcarboxylase to acetyl-CoA to form malonyl-CoA. The sequence is that of Acetyl-coenzyme A carboxylase carboxyl transferase subunit beta from Microcystis aeruginosa (strain NIES-843 / IAM M-2473).